A 278-amino-acid chain; its full sequence is Truncated FRIGIDA-like protein 1 (278 aa).

Residues 1-36 (MTASETIATAINQIDEKKEKLKKAFDDLQAHRSLLS) are a coiled coil.

The protein belongs to the Frigida family.

Its function is as follows. Truncated inactive FRIGIDA-like 1 protein. This is Truncated FRIGIDA-like protein 1 (FRL1) from Arabidopsis thaliana (Mouse-ear cress).